The chain runs to 277 residues: SF-assemblin (277 aa).

The interval 1–20 (MATSGMVSPTSGRPFSPMRS) is disordered. The interval 1-27 (MATSGMVSPTSGRPFSPMRSSVLTTTG) is nonhelical region. The tract at residues 28-277 (SAIKLEHVSE…KMVNMQHNSA (250 aa)) is rod. Residues 70 to 90 (RLEKSMEAEVKRRAESDKQLQ) are a coiled coil.

It belongs to the SF-assemblin family. Post-translationally, the N-terminus is blocked.

The protein localises to the cytoplasm. The protein resides in the cytoskeleton. Its function is as follows. Major component of the striated microtubule-associated fibers (SMAFs; system-I-fibers). The sequence is that of SF-assemblin from Dunaliella bioculata (Green alga).